We begin with the raw amino-acid sequence, 370 residues long: tRNA-specific 2-thiouridylase MnmA 1 (370 aa).

ATP-binding positions include 9-16 and Met-35; that span reads GMSGGVDS. The segment at 95 to 97 is interaction with target base in tRNA; sequence NPD. The active-site Nucleophile is Cys-100. The cysteines at positions 100 and 196 are disulfide-linked. Gly-124 provides a ligand contact to ATP. Residues 146-148 form an interaction with tRNA region; sequence KDQ. Cys-196 serves as the catalytic Cysteine persulfide intermediate. Residues 306–307 form an interaction with tRNA region; that stretch reads RY.

The protein belongs to the MnmA/TRMU family.

It localises to the cytoplasm. It carries out the reaction S-sulfanyl-L-cysteinyl-[protein] + uridine(34) in tRNA + AH2 + ATP = 2-thiouridine(34) in tRNA + L-cysteinyl-[protein] + A + AMP + diphosphate + H(+). In terms of biological role, catalyzes the 2-thiolation of uridine at the wobble position (U34) of tRNA, leading to the formation of s(2)U34. In Geobacillus kaustophilus (strain HTA426), this protein is tRNA-specific 2-thiouridylase MnmA 1.